The chain runs to 446 residues: Iron-sulfur cluster assembly SufBD family protein PH1385 (446 aa).

It belongs to the iron-sulfur cluster assembly SufBD family.

This is Iron-sulfur cluster assembly SufBD family protein PH1385 from Pyrococcus horikoshii (strain ATCC 700860 / DSM 12428 / JCM 9974 / NBRC 100139 / OT-3).